A 789-amino-acid chain; its full sequence is MLDTKYPEIIPGPPKPSAILQPRVFSLPPGTERYVVPGAGAILLRLETGDRIEIENTEGGQPCEIVCADLLGGFDAGLIGARAQGAPSGLMALLTSDDPSLRGLRMGIEARGLNLSQAGAVHLFEHSTPAGTTESFTASREGIVIIAAPGGIMDFQAQDTATPLTVFIRRAVLKSAARFELPDPLADPVADIRVHSATAEAYFVKAGDYIQILDVDGRQCTDFQCFAARKLDKGIAHALDVTTTRTLMGHAYPMPGLHAKYYDQEMQPLVEVIQDTCGRHDAFALACAAKYYDDIGYPGHINCSDNFNAALAPHGVAGRAGWMAINFFFNTGLDDHGVMYADEPWSRPGDYVLLRALTDLVCVSSACPDDTSAANGWNPTDIHVRTYSGKETFQRAVAYRPTPDAEPKMTKQTGFHDRFARFTENFIEYNGFWLANCMSTAGPIEEYHACREKCVVLDLSALRKFEITGPDSEALCQYIFTRNMKTLPVGGVVYTAMCYPHGGMIDDGTVFRLGKDNFRWIGGSDYGGEWIREKAAELGLKVLVRSSTDMQHNIAVQGPESRELLKKVIWTAPHQPKFEELGWFRFAPARIGDDQGVPVVVSRTGYTGELGYEIFCHPKHAGAVFDAVWEAGQAHGIRPMGLEALDMVRIEAGLIFAGYDFSDQTDPFEAGIGFTVPLKSKPDDFIGREALIRRKEHPARVLVGLDIDSNVDVGHGDCVHIGRAQIGEVTSSMRSPILGKNIALARVDVAHHEVGTRVEIGKLDGHQKRLPATIVPFAHYDPQKTRPRS.

This sequence in the C-terminal section; belongs to the GcvT family.

The catalysed reaction is trimethylamine N-oxide + H(+) = dimethylamine + formaldehyde. Catalyzes the conversion of trimethylamine N-oxide (TMAO) to dimethylamine (DMA) and formaldehyde. The chain is Trimethylamine-oxide aldolase from Ruegeria pomeroyi (strain ATCC 700808 / DSM 15171 / DSS-3) (Silicibacter pomeroyi).